Here is a 504-residue protein sequence, read N- to C-terminus: uncharacterized protein (504 aa).

Residues 1 to 212 (MFMKSKAAGS…LYKTQDPVLD (212 aa)) constitute a propeptide that is removed on maturation.

This is an uncharacterized protein from Deinococcus radiodurans (strain ATCC 13939 / DSM 20539 / JCM 16871 / CCUG 27074 / LMG 4051 / NBRC 15346 / NCIMB 9279 / VKM B-1422 / R1).